A 285-amino-acid polypeptide reads, in one-letter code: NAD kinase (285 aa).

Catalysis depends on Asp64, which acts as the Proton acceptor. NAD(+) is bound by residues Asp64 to Gly65, Asn138 to Asp139, Arg149, Arg166, Asp168, Leu176, Ser179 to Ser184, and Gln238.

The protein belongs to the NAD kinase family. It depends on a divalent metal cation as a cofactor.

Its subcellular location is the cytoplasm. The enzyme catalyses NAD(+) + ATP = ADP + NADP(+) + H(+). Involved in the regulation of the intracellular balance of NAD and NADP, and is a key enzyme in the biosynthesis of NADP. Catalyzes specifically the phosphorylation on 2'-hydroxyl of the adenosine moiety of NAD to yield NADP. The sequence is that of NAD kinase from Lawsonia intracellularis (strain PHE/MN1-00).